The primary structure comprises 46 residues: Esculentin-1A (46 aa).

A disulfide bridge connects residues C40 and C46.

This sequence belongs to the frog skin active peptide (FSAP) family. Brevinin subfamily. As to expression, expressed by the skin glands.

It is found in the secreted. Shows antibacterial activity against representative Gram-negative and Gram-positive bacterial species, and hemolytic activity. The sequence is that of Esculentin-1A from Pelophylax lessonae (Pool frog).